Reading from the N-terminus, the 427-residue chain is NAD kinase 2, mitochondrial (427 aa).

The N-terminal 33 residues, 1 to 33 (MSLCLRLLCSVCGAAALRVPLGVSSLRALSGSA), are a transit peptide targeting the mitochondrion.

Belongs to the NAD kinase family. In terms of assembly, homodimer.

Its subcellular location is the mitochondrion. It catalyses the reaction NAD(+) + ATP = ADP + NADP(+) + H(+). In terms of biological role, mitochondrial NAD(+) kinase that phosphorylates NAD(+) to yield NADP(+). Can use both ATP or inorganic polyphosphate as the phosphoryl donor. This Xenopus tropicalis (Western clawed frog) protein is NAD kinase 2, mitochondrial (nadk2).